The chain runs to 485 residues: Glutamyl-tRNA(Gln) amidotransferase subunit A (485 aa).

Catalysis depends on charge relay system residues lysine 79 and serine 154. Catalysis depends on serine 178, which acts as the Acyl-ester intermediate.

This sequence belongs to the amidase family. GatA subfamily. In terms of assembly, heterotrimer of A, B and C subunits.

It carries out the reaction L-glutamyl-tRNA(Gln) + L-glutamine + ATP + H2O = L-glutaminyl-tRNA(Gln) + L-glutamate + ADP + phosphate + H(+). Its function is as follows. Allows the formation of correctly charged Gln-tRNA(Gln) through the transamidation of misacylated Glu-tRNA(Gln) in organisms which lack glutaminyl-tRNA synthetase. The reaction takes place in the presence of glutamine and ATP through an activated gamma-phospho-Glu-tRNA(Gln). This Clostridium botulinum (strain Okra / Type B1) protein is Glutamyl-tRNA(Gln) amidotransferase subunit A.